The following is a 502-amino-acid chain: Keratin, type II cytoskeletal 8 (502 aa).

The segment at 1 to 98 (MSVRSTKVTY…DPSIQQVRTE (98 aa)) is head. Phosphoserine is present on residues S13, S26, S37, and S40. The interval 99 to 134 (EKEQIKTLNNKFASFIDKVRFLEQQNKMLETKWNLL) is coil 1A. One can recognise an IF rod domain in the interval 99–410 (EKEQIKTLNN…KLLEGEESRL (312 aa)). The segment at 135–151 (QNQKTTRSNMDGMFEAY) is linker 1. The interval 152-243 (ISNLRRQLDG…QLYEEELREM (92 aa)) is coil 1B. The linker 12 stretch occupies residues 244–267 (QSQISDTSVVLSMDNNRSLDLDGI). Residues 268 to 406 (IAEVRAQYED…ATYRKLLEGE (139 aa)) are coil 2. The tract at residues 269 to 390 (AEVRAQYEDV…DYQELMNVKL (122 aa)) is necessary for interaction with PNN. Residues 407 to 502 (ESRLESGFQN…SESSDVFSKP (96 aa)) form a tail region. Phosphoserine occurs at positions 425, 428, 436, and 444.

It belongs to the intermediate filament family. Heterotetramer of two type I and two type II keratins. Keratin-8 associates with keratin-18. Expressed in oocytes, eggs, embryos, liver and intestinal mucosa.

Its subcellular location is the cytoplasm. The protein localises to the nucleus. It localises to the nucleoplasm. It is found in the nucleus matrix. Its function is as follows. Together with KRT19, helps to link the contractile apparatus to dystrophin at the costameres of striated muscle. The polypeptide is Keratin, type II cytoskeletal 8 (Xenopus laevis (African clawed frog)).